The primary structure comprises 335 residues: MCVKKIRKASIWATGSYLPEKILSNSDLEQMVDTSDEWIVTRTGIKERRIAAPGEYASIMGAKAAEKAIEKAGLTKDQIECIIFSTSAPDYIFPSSAALAQAYLGIKEVPAFDCMAACTGYLYGLSVAKALVESGAYNNVLLIAADKLSSFVNYEDRNTCVLFGDGGSACVVGESRPGALEITNVNLGADGSVADLLSLPAGGSRLPASPETVAEGKHFIYMEGKEVFKHAVRRMESAAKICIAEAGLAEGDIDWLVPHQANERIIDAIAKRFEIDESKVFKTLSKYGNTAASSVCIALDELLQLHVINSGEYLLLVAFGGGLSWGAVVLRQVEG.

Catalysis depends on residues Cys118 and His259. An ACP-binding region spans residues 260 to 264 (QANER). Asn289 is a catalytic residue.

This sequence belongs to the thiolase-like superfamily. FabH family. As to quaternary structure, homodimer.

Its subcellular location is the cytoplasm. It catalyses the reaction malonyl-[ACP] + acetyl-CoA + H(+) = 3-oxobutanoyl-[ACP] + CO2 + CoA. It participates in lipid metabolism; fatty acid biosynthesis. Its function is as follows. Catalyzes the condensation reaction of fatty acid synthesis by the addition to an acyl acceptor of two carbons from malonyl-ACP. Catalyzes the first condensation reaction which initiates fatty acid synthesis and may therefore play a role in governing the total rate of fatty acid production. Possesses both acetoacetyl-ACP synthase and acetyl transacylase activities. Its substrate specificity determines the biosynthesis of branched-chain and/or straight-chain of fatty acids. The polypeptide is Beta-ketoacyl-[acyl-carrier-protein] synthase III (Chlamydia caviae (strain ATCC VR-813 / DSM 19441 / 03DC25 / GPIC) (Chlamydophila caviae)).